Here is a 274-residue protein sequence, read N- to C-terminus: Ribosomal RNA small subunit methyltransferase A (274 aa).

Residues His15, Leu17, Gly42, Glu64, Asp89, and Asn109 each coordinate S-adenosyl-L-methionine.

Belongs to the class I-like SAM-binding methyltransferase superfamily. rRNA adenine N(6)-methyltransferase family. RsmA subfamily.

The protein resides in the cytoplasm. The enzyme catalyses adenosine(1518)/adenosine(1519) in 16S rRNA + 4 S-adenosyl-L-methionine = N(6)-dimethyladenosine(1518)/N(6)-dimethyladenosine(1519) in 16S rRNA + 4 S-adenosyl-L-homocysteine + 4 H(+). Functionally, specifically dimethylates two adjacent adenosines (A1518 and A1519) in the loop of a conserved hairpin near the 3'-end of 16S rRNA in the 30S particle. May play a critical role in biogenesis of 30S subunits. This chain is Ribosomal RNA small subunit methyltransferase A, found in Synechococcus sp. (strain CC9605).